Here is a 406-residue protein sequence, read N- to C-terminus: MNGQTPARHYYKKLVPSLILILNCIQFLSHPTKADPILLAFVFAVYLAFIWIIPYVASTAVSLSIFIGLWLLTDFFWAVSGQEQGAAYFLIVFLMIYAAFRLPSRLSLIFTACLIGGNILLLSSQGGSLNTIISNISIMLGLYVLFSSMRFRREARREAERNHAELAKMHVQLEHAHKELQKAHAELQEASVLSLRYAVLEERTRIARDIHDSIGHELTSVIVQLQSLPYILKSSKEDSEKVIQNVLSVARECLQEVRSVVHQMGRSESMVGLTALRGLIHQVEERSGLHVSLDTAGLSEESWPPNVSETIYRILQEALTNIIRHADASHAAAVISNDKSHLYVTITDDGQFTGSLTYGFGLTGMKERAEKAGGSLTFSAVQPSGLKIELSLPLMTTNKEQKDEQR.

Over 1–13 (MNGQTPARHYYKK) the chain is Cytoplasmic. A helical transmembrane segment spans residues 14 to 34 (LVPSLILILNCIQFLSHPTKA). At 35–36 (DP) the chain is on the extracellular side. The helical transmembrane segment at 37-57 (ILLAFVFAVYLAFIWIIPYVA) threads the bilayer. Position 58 (Ser58) is a topological domain, cytoplasmic. 2 consecutive transmembrane segments (helical) span residues 59–79 (TAVSLSIFIGLWLLTDFFWAV) and 80–100 (SGQEQGAAYFLIVFLMIYAAF). A topological domain (cytoplasmic) is located at residue Arg101. A helical transmembrane segment spans residues 102–122 (LPSRLSLIFTACLIGGNILLL). The Extracellular portion of the chain corresponds to 123–125 (SSQ). The helical transmembrane segment at 126-146 (GGSLNTIISNISIMLGLYVLF) threads the bilayer. Residues 147-406 (SSMRFRREAR…TNKEQKDEQR (260 aa)) are Cytoplasmic-facing. The Histidine kinase domain maps to 209–396 (DIHDSIGHEL…KIELSLPLMT (188 aa)). The residue at position 211 (His211) is a Phosphohistidine; by autocatalysis.

It is found in the cell membrane. It carries out the reaction ATP + protein L-histidine = ADP + protein N-phospho-L-histidine.. Probable member of the two-component regulatory system YxjM/YxjL. May activate YxjL by phosphorylation. In Bacillus subtilis (strain 168), this protein is Sensor histidine kinase YxjM (yxjM).